The sequence spans 85 residues: Large ribosomal subunit protein bL27 (85 aa).

The segment at 1-20 is disordered; sequence MAHKKAAGSSRNGRDSNPKM.

It belongs to the bacterial ribosomal protein bL27 family.

The polypeptide is Large ribosomal subunit protein bL27 (Psychrobacter arcticus (strain DSM 17307 / VKM B-2377 / 273-4)).